A 420-amino-acid polypeptide reads, in one-letter code: UDP-N-acetylglucosamine 1-carboxyvinyltransferase (420 aa).

Residue 22–23 (KN) coordinates phosphoenolpyruvate. A UDP-N-acetyl-alpha-D-glucosamine-binding site is contributed by Arg-93. Residue Cys-117 is the Proton donor of the active site. Cys-117 carries the 2-(S-cysteinyl)pyruvic acid O-phosphothioketal modification. UDP-N-acetyl-alpha-D-glucosamine contacts are provided by Asp-307 and Ile-329.

Belongs to the EPSP synthase family. MurA subfamily.

The protein localises to the cytoplasm. It catalyses the reaction phosphoenolpyruvate + UDP-N-acetyl-alpha-D-glucosamine = UDP-N-acetyl-3-O-(1-carboxyvinyl)-alpha-D-glucosamine + phosphate. The protein operates within cell wall biogenesis; peptidoglycan biosynthesis. Its function is as follows. Cell wall formation. Adds enolpyruvyl to UDP-N-acetylglucosamine. This chain is UDP-N-acetylglucosamine 1-carboxyvinyltransferase, found in Saccharophagus degradans (strain 2-40 / ATCC 43961 / DSM 17024).